Here is a 365-residue protein sequence, read N- to C-terminus: Putative tRNA 2'-phosphotransferase (365 aa).

Disordered regions lie at residues 1–35 (MYKN…IRPR) and 231–254 (LLDA…PESI). The segment covering 17-27 (SGTPATKSSSK) has biased composition (low complexity).

This sequence belongs to the KptA/TPT1 family.

It carries out the reaction 2'-phospho-[ligated tRNA] + NAD(+) = mature tRNA + ADP-alpha-D-ribose 1'',2''-cyclic phosphate + nicotinamide. Functionally, catalyzes the last step of tRNA splicing, the transfer of the splice junction 2'-phosphate from ligated tRNA to NAD to produce ADP-ribose 1''-2'' cyclic phosphate. This chain is Putative tRNA 2'-phosphotransferase, found in Schizosaccharomyces pombe (strain 972 / ATCC 24843) (Fission yeast).